The chain runs to 238 residues: DNA repair protein RecO (238 aa).

It belongs to the RecO family.

Involved in DNA repair and RecF pathway recombination. The sequence is that of DNA repair protein RecO from Aliivibrio salmonicida (strain LFI1238) (Vibrio salmonicida (strain LFI1238)).